We begin with the raw amino-acid sequence, 124 residues long: Small ribosomal subunit protein uS12 (124 aa).

Residues 1 to 25 are disordered; that stretch reads MARINQLVRKPRRARAKKSDVPALE. At Asp-89 the chain carries 3-methylthioaspartic acid. A disordered region spans residues 103-124; it reads DTAGVSGRRRGRSKYGEKKPKE.

It belongs to the universal ribosomal protein uS12 family. As to quaternary structure, part of the 30S ribosomal subunit. Contacts proteins S8 and S17. May interact with IF1 in the 30S initiation complex.

Functionally, with S4 and S5 plays an important role in translational accuracy. Its function is as follows. Interacts with and stabilizes bases of the 16S rRNA that are involved in tRNA selection in the A site and with the mRNA backbone. Located at the interface of the 30S and 50S subunits, it traverses the body of the 30S subunit contacting proteins on the other side and probably holding the rRNA structure together. The combined cluster of proteins S8, S12 and S17 appears to hold together the shoulder and platform of the 30S subunit. This chain is Small ribosomal subunit protein uS12, found in Coxiella burnetii (strain Dugway 5J108-111).